The chain runs to 299 residues: pH-regulated antigen PRA1 (299 aa).

The signal sequence occupies residues 1 to 15 (MNYLLFCLFFAFSVA). 4 N-linked (GlcNAc...) asparagine glycosylation sites follow: Asn-48, Asn-89, Asn-135, and Asn-208. Positions 253–299 (FEDSDSGSDSGASSTASSSHQHTDSNPSATTDANSHCHTHADGEVHC) are disordered. The segment covering 259–272 (GSDSGASSTASSSH) has biased composition (low complexity). The span at 278–288 (NPSATTDANSH) shows a compositional bias: polar residues.

It belongs to the ZPS1 family. As to quaternary structure, component of a multiprotein complex of 250 kDa composed of at least HYR1, MP65, and PRA1. Interacts with host Integrin alpha-M/beta-2 heterodimer. Also binds human factor H (CFH), CFHR1, plasminogen (PLG), complement C3, and C4BPA. Interacts with ZRT101. In terms of processing, N- and O-glycosylated. The N- and 0-glycosidically linked carbohydrates represent 18 to 20 percent and 3 to 4 percent, respectively, of the molecular mass of PRA1. 0-linked sugar residues may be involved in the interaction with fibrinogen. Contributes highly to the carbohydrate component of the matrix. Treatment with tunicamycin impairs glycosylation.

Its subcellular location is the secreted. Its function is as follows. Cell surface protein involved in the host-parasite interaction during candidal infection. With MP65, represents a major component of the biofilm matrix. As a surface protein, binds the two human complement regulators CFH and CFHR1, as well as plasminogen PLG, mediates complement evasion and extra-cellular matrix interaction and/or degradation. As a released protein, enhances complement control in direct vicinity of the yeast and thus generates an additional protective layer which controls host complement attack, assisting the fungus in escaping host surveillance. Binds to host fluid-phase C3 and blocks cleavage of C3 to C3a and C3b, leading to inhibition of complement activation and protection from uptake of C.albicans by human macrophages. Also mediates human complement control and complement evasion through binding to C4BPA, another human complement inhibitor, as well as through binding to host integrin alpha-M/beta-2. Binds zinc from its environment and then reassociates with ZRT1 to acquire this essential metal. The polypeptide is pH-regulated antigen PRA1 (Candida albicans (strain SC5314 / ATCC MYA-2876) (Yeast)).